The following is a 432-amino-acid chain: GTPase Obg (432 aa).

The 159-residue stretch at 1–159 folds into the Obg domain; sequence MKFIDTAKFT…YEVKAELKVL (159 aa). Residues 160-332 enclose the OBG-type G domain; that stretch reads ADVGFVGLPN…LLLKIAKELE (173 aa). GTP-binding positions include 166–173, 191–195, 213–216, 284–287, and 313–315; these read GLPNAGKS, FTTLN, DLPG, NKMD, and SGL. Ser-173 and Thr-193 together coordinate Mg(2+). The 79-residue stretch at 354-432 folds into the OCT domain; it reads RLEEDEEDIQ…VFEYELEWMD (79 aa).

It belongs to the TRAFAC class OBG-HflX-like GTPase superfamily. OBG GTPase family. Monomer. Mg(2+) serves as cofactor.

Its subcellular location is the cytoplasm. An essential GTPase which binds GTP, GDP and possibly (p)ppGpp with moderate affinity, with high nucleotide exchange rates and a fairly low GTP hydrolysis rate. Plays a role in control of the cell cycle, stress response, ribosome biogenesis and in those bacteria that undergo differentiation, in morphogenesis control. The chain is GTPase Obg from Mesoplasma florum (strain ATCC 33453 / NBRC 100688 / NCTC 11704 / L1) (Acholeplasma florum).